Here is a 227-residue protein sequence, read N- to C-terminus: D-lyxose/D-mannose isomerase (227 aa).

Residues Lys90, 103–110 (HFHWRKRE), His171, Glu186, and Asp193 each bind D-fructose. Mn(2+) contacts are provided by His103, His105, Glu110, and His171.

It belongs to the D-lyxose ketol-isomerase family. Homodimer; disulfide-linked. Dimerization is facilitated through a disulfide bond between the two monomers of the dimeric enzyme. Mn(2+) is required as a cofactor.

It catalyses the reaction D-lyxose = D-xylulose. The catalysed reaction is D-mannose = D-fructose. Functionally, sugar isomerase that catalyzes the reversible isomerization of D-lyxose to D-xylulose, and D-mannose to D-fructose. Shows similar activity toward D-lyxose and D-mannose with a turnover and catalytic efficiency for D-lyxose as a substrate only 1.1- and 1.3-fold higher than those for D-mannose, respectively. Shows weaker activity with L-gulose, D-talose, L-ribose and L-allose. Overexpression enables cell growth on the rare pentose D-lyxose as the sole carbon source. The polypeptide is D-lyxose/D-mannose isomerase (Escherichia coli O157:H7).